We begin with the raw amino-acid sequence, 389 residues long: tRNA-specific 2-thiouridylase MnmA (389 aa).

ATP contacts are provided by residues 34-41 (AMSGGVDS) and L60. The active-site Nucleophile is C128. A disulfide bond links C128 and C225. G152 contacts ATP. The interval 174-176 (RDQ) is interaction with tRNA. The Cysteine persulfide intermediate role is filled by C225.

The protein belongs to the MnmA/TRMU family.

It localises to the cytoplasm. The enzyme catalyses S-sulfanyl-L-cysteinyl-[protein] + uridine(34) in tRNA + AH2 + ATP = 2-thiouridine(34) in tRNA + L-cysteinyl-[protein] + A + AMP + diphosphate + H(+). Its function is as follows. Catalyzes the 2-thiolation of uridine at the wobble position (U34) of tRNA, leading to the formation of s(2)U34. The sequence is that of tRNA-specific 2-thiouridylase MnmA from Paracoccus denitrificans (strain Pd 1222).